We begin with the raw amino-acid sequence, 263 residues long: Hemin import ATP-binding protein HmuV (263 aa).

The region spanning 2 to 242 (IEARDVSVDI…DLIEKVFDCR (241 aa)) is the ABC transporter domain. 34 to 41 (GPNGSGKT) is an ATP binding site.

It belongs to the ABC transporter superfamily. Heme (hemin) importer (TC 3.A.1.14.5) family. The complex is composed of two ATP-binding proteins (HmuV), two transmembrane proteins (HmuU) and a solute-binding protein (HmuT).

The protein resides in the cell inner membrane. Part of the ABC transporter complex HmuTUV involved in hemin import. Responsible for energy coupling to the transport system. This chain is Hemin import ATP-binding protein HmuV, found in Mesorhizobium japonicum (strain LMG 29417 / CECT 9101 / MAFF 303099) (Mesorhizobium loti (strain MAFF 303099)).